The following is a 420-amino-acid chain: Putative epoxide hydrolase (420 aa).

Belongs to the peptidase S33 family.

Its pathway is mycotoxin biosynthesis. In terms of biological role, putative epoxide hydrolase; part of the fragmented gene cluster that mediates the biosynthesis of dothistromin (DOTH), a polyketide toxin very similar in structure to the aflatoxin precursor, versicolorin B. The first step of the pathway is the conversion of acetate to norsolorinic acid (NOR) and requires the fatty acid synthase subunits hexA and hexB, as well as the polyketide synthase pksA. PksA combines a hexanoyl starter unit and 7 malonyl-CoA extender units to synthesize the precursor NOR. The hexanoyl starter unit is provided to the acyl-carrier protein (ACP) domain by the fungal fatty acid synthase hexA/hexB. The second step is the conversion of NOR to averantin (AVN) and requires the norsolorinic acid ketoreductase nor1, which catalyzes the dehydration of norsolorinic acid to form (1'S)-averantin. The cytochrome P450 monooxygenase avnA then catalyzes the hydroxylation of AVN to 5'hydroxyaverantin (HAVN). The next step is performed by adhA that transforms HAVN to averufin (AVF). Averufin might then be converted to hydroxyversicolorone by cypX and avfA. Hydroxyversicolorone is further converted versiconal hemiacetal acetate (VHA) by moxY. VHA is then the substrate for the versiconal hemiacetal acetate esterase est1 to yield versiconal (VAL). Versicolorin B synthase vbsA then converts VAL to versicolorin B (VERB) by closing the bisfuran ring. Then, the activity of the versicolorin B desaturase verB leads to versicolorin A (VERA). DotB, a predicted chloroperoxidase, may perform epoxidation of the A-ring of VERA. Alternatively, a cytochrome P450, such as cypX or avnA could catalyze this step. It is also possible that another, uncharacterized, cytochrome P450 enzyme is responsible for this step. Opening of the epoxide could potentially be achieved by the epoxide hydrolase epoA. However, epoA seems not to be required for DOTH biosynthesis, but other epoxide hydrolases may have the ability to complement this hydrolysis. Alternatively, opening of the epoxide ring could be achieved non-enzymatically. The next step is the deoxygenation of ring A to yield the 5,8-dihydroxyanthraquinone which is most likely catalyzed by the NADPH dehydrogenase encoded by ver1. The last stages of DOTH biosynthesis are proposed to involve hydroxylation of the bisfuran. OrdB and norB might have oxidative roles here. An alternative possibility is that cytochrome P450 monoogenases such as avnA and cypX might perform these steps in addition to previously proposed steps. In Dothistroma septosporum (Red band needle blight fungus), this protein is Putative epoxide hydrolase.